Here is a 114-residue protein sequence, read N- to C-terminus: Replication initiation control protein YabA (114 aa).

Residues histidine 84, cysteine 86, cysteine 102, and cysteine 105 each contribute to the Zn(2+) site.

Belongs to the YabA family. In terms of assembly, homotetramer. Interacts with both DnaA and DnaN, acting as a bridge between these two proteins. Requires Zn(2+) as cofactor.

It is found in the cytoplasm. Its subcellular location is the nucleoid. In terms of biological role, involved in control of chromosome replication initiation. Inhibits the cooperative binding of DnaA to the oriC region, thus negatively regulating initiation of chromosome replication. Inhibits the ability of DnaA-ATP to form a helix on DNA; does not disassemble preformed DnaA-DNA helices. Decreases the residence time of DnaA on the chromosome at its binding sites (oriC, replication forks and promoter-binding sites). Tethers DnaA to the replication machinery via the DNA polymerase beta sliding clamp subunit (dnaN). Associates with oriC and other DnaA targets on the chromosome in a DnaA-dependent manner. This chain is Replication initiation control protein YabA, found in Ligilactobacillus salivarius (strain UCC118) (Lactobacillus salivarius).